Reading from the N-terminus, the 429-residue chain is MNLSTFIKKARRWFYDTPDRALEQAYRAALNIQAIELEHFGGKPVSGHNADYSDSVIRYFQGEVRKQLKIIEVRLREFRSFNTVVPVSEETIQKKASNIYYPDAADKPTLIIEKLRFIDEITGRYGRGLSKQSVALVPLNGPEAPQTNGDRPDNKPKVETVSDKTGLVPRSIMRTFSRIQREIDPKSNEAEAEVVTKFRRSRNKTAVSIRFLLTLVIVPLLVHQLAKIAITPFVEEHFFTEASPALFVNSDLENEAFEELEHYRATLEMRQLVGLAPALTEVEITEKIQEKATEIAQDYRAESYNAYENIFSDIFSFFAFVGILLISKREIAMLKGFLDEIVYGLSDSAKAFLIILFTDIFVGYHSPHGWEIILENVAKHFGIAESRDFNFLFIATFPVILDTVLKYWIFRYLNRISPSAVATYRNMNE.

The segment at 139 to 161 (LNGPEAPQTNGDRPDNKPKVETV) is disordered. The span at 150-161 (DRPDNKPKVETV) shows a compositional bias: basic and acidic residues. 4 helical membrane-spanning segments follow: residues 211–231 (FLLT…IAIT), 306–326 (AYEN…ILLI), 353–373 (LIIL…WEII), and 389–409 (FNFL…KYWI).

It belongs to the CemA family.

It is found in the cell inner membrane. Its function is as follows. Required for H(+) efflux immediately after light irradiation to form a rapid H(+) concentration gradient across the thylakoid membranes. Together with PxcL, contributes to transient H(+) uptake following dark to light transition. The sequence is that of Proton extrusion protein PxcA from Picosynechococcus sp. (strain ATCC 27264 / PCC 7002 / PR-6) (Agmenellum quadruplicatum).